Consider the following 155-residue polypeptide: Gas vesicle protein K (155 aa).

Belongs to the gas vesicle GvpK family.

The protein localises to the gas vesicle. Its function is as follows. Might be involved in nucleating gas vesicle formation. Gas vesicles (GV) are hollow, gas filled proteinaceous nanostructures. During planktonic growth they allow positioning of the organism at a favorable depth for light or nutrient acquisition. Cluster expression in E.coli (gvpA1-gvpA2-gvpC-gvpN-gvpJ-gvpK-gvpF-gvpG-gvpV-gvpW) allows cells to float and produces irregularly shaped gas vesicles. This is Gas vesicle protein K from Nostoc sp. (strain PCC 7120 / SAG 25.82 / UTEX 2576).